The primary structure comprises 388 residues: MNSTDVTKGFTEQFGKQAEHTFFAPGRINLIGEHTDYNGGHVFPCAISLGTYAAVGTNEDNAFRLYSANFPKVGIIDIPFSDLFQDKRGLWTDYFQGMARVMKTAGANFTHGLNVYINGNLPDGAGLSSSASLEMLVGTILNNLFDGGFEPLELVQFGVKVENDYIGVNSGVMDQFAIEMGRANQATLLDTNTMKYEYLPVEMGDNVIVIMNTNKRRELADSKYNERRSECEKALAMLQKGIEVKSLGQLSEDEFDENTYLIYDPILIKRARHAVFENQRTLKASKALQDGDLKTFGKLVSASGVSLAFDYEVTGIELDTLVTNALKQRGVLGARMTGAGFGGCAIAIVNSADVEDFIDNVGKAYREKIGYDAHFYVADIADGARQLN.

Residue 33–36 coordinates substrate; it reads EHTD. ATP-binding positions include S67 and 124–130; that span reads GAGLSSS. Mg(2+) is bound by residues S130 and E162. D174 functions as the Proton acceptor in the catalytic mechanism. Y224 is a binding site for substrate.

Belongs to the GHMP kinase family. GalK subfamily.

It is found in the cytoplasm. It catalyses the reaction alpha-D-galactose + ATP = alpha-D-galactose 1-phosphate + ADP + H(+). It participates in carbohydrate metabolism; galactose metabolism. In terms of biological role, catalyzes the transfer of the gamma-phosphate of ATP to D-galactose to form alpha-D-galactose-1-phosphate (Gal-1-P). The polypeptide is Galactokinase (Lacticaseibacillus paracasei (strain ATCC 334 / BCRC 17002 / CCUG 31169 / CIP 107868 / KCTC 3260 / NRRL B-441) (Lactobacillus paracasei)).